The chain runs to 713 residues: Polyribonucleotide nucleotidyltransferase (713 aa).

Asp-488 and Asp-494 together coordinate Mg(2+). A KH domain is found at 555 to 614; sequence PQMEIIKVPTDKIRDVIGSGGKVIRGIVDETGAKVNIDDDGTVQISAMDRKSIDAAIKMI. The S1 motif domain maps to 624-692; that stretch reads GEIYEGKVVS…ERGKVRLSMK (69 aa).

The protein belongs to the polyribonucleotide nucleotidyltransferase family. It depends on Mg(2+) as a cofactor.

It is found in the cytoplasm. It catalyses the reaction RNA(n+1) + phosphate = RNA(n) + a ribonucleoside 5'-diphosphate. Involved in mRNA degradation. Catalyzes the phosphorolysis of single-stranded polyribonucleotides processively in the 3'- to 5'-direction. This Hyphomonas neptunium (strain ATCC 15444) protein is Polyribonucleotide nucleotidyltransferase.